Here is a 155-residue protein sequence, read N- to C-terminus: Small ribosomal subunit protein uS7cz/uS7cy (155 aa).

It belongs to the universal ribosomal protein uS7 family. In terms of assembly, part of the 30S ribosomal subunit.

It is found in the plastid. It localises to the chloroplast. Its function is as follows. One of the primary rRNA binding proteins, it binds directly to 16S rRNA where it nucleates assembly of the head domain of the 30S subunit. This Pelargonium hortorum (Common geranium) protein is Small ribosomal subunit protein uS7cz/uS7cy (rps7-A).